The following is a 637-amino-acid chain: Acyl-CoA ligase cm3C (637 aa).

Residues 282-290 (TSGTSGRQK), 423-428 (HAWGLT), Asp-507, Arg-526, and Lys-624 each bind ATP. An SBD1 region spans residues 353–423 (DMQRMLGSVA…SLQPSWEFLH (71 aa)). Residues 424 to 486 (AWGLTETCIV…YKAPNMFVGY (63 aa)) are SBD2.

The protein belongs to the ATP-dependent AMP-binding enzyme family.

Its pathway is secondary metabolite biosynthesis. In terms of biological role, acyl-CoA ligase; part of the gene cluster that mediates the biosynthesis of beauveriolides I and III, cyclodepsipeptides acting as inhibitors of the acyl-CoA:cholesterol acyltransferase. The HR-PKS cm3B initiates the biosynthesis of beauveriolides by iteratively catalyzing the formation of the linear polyketide chain. The ATP-dependent acetyl-CoA ligase cm3D converts the polyketide carboxylic acid to a CoA thioester which id shuttled to the first T domain in the NRPS cm3A by the acetyltransferase cm3C. Cm3A contains 13 domains and assembles the polyketide chain, L-phenylalanine, L-alanine, and D-leucine (or D-allo-isoleucine) to form beauveriolide I (or beauveriolide III). The production of both beauveriolides I and III suggests the substrate adaptability of cm3B, using different amino acids as substrates. The polypeptide is Acyl-CoA ligase cm3C (Cordyceps militaris (strain CM01) (Caterpillar fungus)).